The sequence spans 338 residues: Putative acyl-[acyl-carrier-protein] desaturase DesA1 (338 aa).

6 residues coordinate Fe cation: Glu76, Glu107, His110, Glu167, Glu197, and His200. Over residues 314–328 (EARTGKKVSAHELHK) the composition is skewed to basic and acidic residues. The disordered stretch occupies residues 314–338 (EARTGKKVSAHELHKTAGKLAMSRR).

Belongs to the fatty acid desaturase type 2 family. Homodimer. Fe(2+) serves as cofactor.

The protein resides in the cell surface. It participates in lipid metabolism; fatty acid metabolism. Its function is as follows. May be a desaturase involved in mycobacterial fatty acid biosynthesis. The chain is Putative acyl-[acyl-carrier-protein] desaturase DesA1 (desA1) from Mycobacterium tuberculosis (strain CDC 1551 / Oshkosh).